The primary structure comprises 282 residues: Nucleotide-binding protein XCC2806 (282 aa).

ATP is bound at residue 5–12 (GLSGSGKS). 57-60 (DVRS) contributes to the GTP binding site.

The protein belongs to the RapZ-like family.

Its function is as follows. Displays ATPase and GTPase activities. This Xanthomonas campestris pv. campestris (strain ATCC 33913 / DSM 3586 / NCPPB 528 / LMG 568 / P 25) protein is Nucleotide-binding protein XCC2806.